Reading from the N-terminus, the 172-residue chain is Bifunctional protein PyrR (172 aa).

The PRPP-binding signature appears at 90 to 102 (LVLVDDVLMSGRT).

This sequence belongs to the purine/pyrimidine phosphoribosyltransferase family. PyrR subfamily.

The enzyme catalyses UMP + diphosphate = 5-phospho-alpha-D-ribose 1-diphosphate + uracil. In terms of biological role, regulates the transcription of the pyrimidine nucleotide (pyr) operon in response to exogenous pyrimidines. Also displays a weak uracil phosphoribosyltransferase activity which is not physiologically significant. The sequence is that of Bifunctional protein PyrR from Pseudomonas entomophila (strain L48).